The primary structure comprises 274 residues: Membrane protein insertase YidC 2 (274 aa).

The N-terminal stretch at 1–20 is a signal peptide; it reads MKKKLKLTSLLGLSLLIMTA. Cys21 is lipidated: N-palmitoyl cysteine. Cys21 is lipidated: S-diacylglycerol cysteine. Helical transmembrane passes span 56–76, 128–148, 167–187, and 205–225; these read ISIGVGIILFTVLIRTVLLPV, SDSLWPILIQMPVILALFQAL, VDTTLVLPILAAVFTFLSTWL, and GIPVLIFIFAVYAPGGVALYW.

Belongs to the OXA1/ALB3/YidC family. Type 2 subfamily.

Its subcellular location is the cell membrane. Functionally, required for the insertion and/or proper folding and/or complex formation of integral membrane proteins into the membrane. Involved in integration of membrane proteins that insert both dependently and independently of the Sec translocase complex, as well as at least some lipoproteins. The polypeptide is Membrane protein insertase YidC 2 (Streptococcus pneumoniae serotype 4 (strain ATCC BAA-334 / TIGR4)).